We begin with the raw amino-acid sequence, 125 residues long: MINSPRVCIQVQSVYIEAQSSPDDERYVFAYTVTIRNLGRAPVQLLGRYWLITNGHGRETEVQGEGVVGVQPRIAPGEEYQYTSGAVIETPLGTMQGHYEMIDENGDAFTIDIPVFRLAVPTLIH.

The region spanning 1 to 125 (MINSPRVCIQ…FRLAVPTLIH (125 aa)) is the ApaG domain.

In Salmonella arizonae (strain ATCC BAA-731 / CDC346-86 / RSK2980), this protein is Protein ApaG.